Here is a 411-residue protein sequence, read N- to C-terminus: Serine/threonine transporter SstT (411 aa).

Transmembrane regions (helical) follow at residues 17-37 (IMVG…TASA), 41-61 (LGAL…LVLV), 79-99 (ILFL…VVSF), 138-158 (ALIS…GLAL), 189-209 (LGIF…ALWG), 214-234 (LVVL…LIVF), 295-315 (MAGA…TLGI), and 327-347 (VVAA…LLLI).

Belongs to the dicarboxylate/amino acid:cation symporter (DAACS) (TC 2.A.23) family.

The protein resides in the cell inner membrane. The catalysed reaction is L-serine(in) + Na(+)(in) = L-serine(out) + Na(+)(out). It catalyses the reaction L-threonine(in) + Na(+)(in) = L-threonine(out) + Na(+)(out). Functionally, involved in the import of serine and threonine into the cell, with the concomitant import of sodium (symport system). The protein is Serine/threonine transporter SstT of Serratia proteamaculans (strain 568).